The primary structure comprises 359 residues: 3-dehydroquinate synthase (359 aa).

NAD(+) contacts are provided by residues 71–76 (DGEQFK), 105–109 (GVIGD), 129–130 (TT), Lys142, Lys151, and 169–172 (CLHT). Zn(2+)-binding residues include Glu184, His247, and His264.

The protein belongs to the sugar phosphate cyclases superfamily. Dehydroquinate synthase family. Co(2+) is required as a cofactor. Zn(2+) serves as cofactor. It depends on NAD(+) as a cofactor.

The protein localises to the cytoplasm. It carries out the reaction 7-phospho-2-dehydro-3-deoxy-D-arabino-heptonate = 3-dehydroquinate + phosphate. It functions in the pathway metabolic intermediate biosynthesis; chorismate biosynthesis; chorismate from D-erythrose 4-phosphate and phosphoenolpyruvate: step 2/7. Its function is as follows. Catalyzes the conversion of 3-deoxy-D-arabino-heptulosonate 7-phosphate (DAHP) to dehydroquinate (DHQ). The polypeptide is 3-dehydroquinate synthase (Shewanella putrefaciens (strain CN-32 / ATCC BAA-453)).